A 311-amino-acid chain; its full sequence is MKKKIGLLVMAYGTPYKEEDIERYYTHIRRGRKPSPEMLEDLTERYRAIGGISPLATITLEQAKKLEKRLNEVQDEVEYHMYLGLKHIEPFIEDAVKDMHNDGIQDAIALVLAPHYSTFSVKSYVGRAQEEAEKLGNLTIHGIDSWYKEPKFIQYWVDAVKGIYNGMSDAEREKAVLIVSAHSLPEKIIAMGDPYPEQLHETADYIARGAEVANYAVGWQSAGNTPDPWIGPDVQDLTRELNEKHGYTSFVYAPVGFVAEHLEVLYDNDFECKVVTDEIGAKYYRPEMPNASDAFIDCLTDVVLKKKESVL.

Fe-coproporphyrin III-binding positions include tyrosine 12, arginine 29, arginine 45–tyrosine 46, serine 53, and tyrosine 124. 2 residues coordinate Fe(2+): histidine 182 and glutamate 263.

Belongs to the ferrochelatase family.

Its subcellular location is the cytoplasm. The catalysed reaction is Fe-coproporphyrin III + 2 H(+) = coproporphyrin III + Fe(2+). The protein operates within porphyrin-containing compound metabolism; protoheme biosynthesis. In terms of biological role, involved in coproporphyrin-dependent heme b biosynthesis. Catalyzes the insertion of ferrous iron into coproporphyrin III to form Fe-coproporphyrin III. The protein is Coproporphyrin III ferrochelatase 1 of Bacillus cereus (strain ATCC 10987 / NRS 248).